The chain runs to 295 residues: Homeobox protein XHOX-7.1 (295 aa).

Disordered regions lie at residues 75–115 (RKPG…PISL) and 134–175 (KPES…KPRT). The segment covering 84-97 (SSPTGSPLAGTSHS) has biased composition (polar residues). Low complexity predominate over residues 141–153 (SSWIQSPSFSPSP). The span at 164–174 (LRKHKTNRKPR) shows a compositional bias: basic residues. Residues 170 to 229 (NRKPRTPFTTSQLLALERKFRQKQYLSIAERAEFSSSLNLTETQVKIWFQNRRAKAKRLQ) constitute a DNA-binding region (homeobox).

This sequence belongs to the Msh homeobox family.

The protein resides in the nucleus. This Xenopus laevis (African clawed frog) protein is Homeobox protein XHOX-7.1.